The chain runs to 641 residues: Protein BCAP (641 aa).

Coiled-coil stretches lie at residues 83 to 144, 191 to 270, 299 to 375, and 487 to 599; these read HWPV…KQND, EKDN…RKLE, QKQK…EREQ, and FKLE…TLNA.

This sequence belongs to the ODF2 family.

It localises to the cytoplasm. Its subcellular location is the cytoskeleton. The protein localises to the microtubule organizing center. It is found in the centrosome. The protein resides in the centriole. It localises to the centriolar satellite. Its subcellular location is the cilium basal body. Its function is as follows. Acts as a suppressor of ciliogenesis, specifically, the initiation of ciliogenesis. The chain is Protein BCAP (odf2l) from Xenopus laevis (African clawed frog).